The sequence spans 82 residues: Cytochrome b559 subunit alpha (82 aa).

Residues 22–36 (IIHAVTLPAIFIAGF) form a helical membrane-spanning segment. His24 contacts heme.

The protein belongs to the PsbE/PsbF family. As to quaternary structure, heterodimer of an alpha subunit and a beta subunit. PSII is composed of 1 copy each of membrane proteins PsbA, PsbB, PsbC, PsbD, PsbE, PsbF, PsbH, PsbI, PsbJ, PsbK, PsbL, PsbM, PsbT, PsbX, PsbY, Psb30/Ycf12, peripheral proteins PsbO, CyanoQ (PsbQ), PsbU, PsbV and a large number of cofactors. It forms dimeric complexes. Heme b is required as a cofactor.

The protein localises to the cellular thylakoid membrane. In terms of biological role, this b-type cytochrome is tightly associated with the reaction center of photosystem II (PSII). PSII is a light-driven water:plastoquinone oxidoreductase that uses light energy to abstract electrons from H(2)O, generating O(2) and a proton gradient subsequently used for ATP formation. It consists of a core antenna complex that captures photons, and an electron transfer chain that converts photonic excitation into a charge separation. This is Cytochrome b559 subunit alpha from Prochlorococcus marinus (strain MIT 9211).